Here is a 605-residue protein sequence, read N- to C-terminus: DNA primase (605 aa).

The segment at 38 to 62 (CPFHDEKTPSFTVSEDKQICHCFGC) adopts a CHC2-type zinc-finger fold. One can recognise a Toprim domain in the interval 260–341 (DEIVLLEGFM…NVFVIQLPSG (82 aa)). Mg(2+)-binding residues include glutamate 266, aspartate 310, and aspartate 312.

The protein belongs to the DnaG primase family. As to quaternary structure, monomer. Interacts with DnaB. Zn(2+) is required as a cofactor. The cofactor is Mg(2+).

It carries out the reaction ssDNA + n NTP = ssDNA/pppN(pN)n-1 hybrid + (n-1) diphosphate.. Its function is as follows. RNA polymerase that catalyzes the synthesis of short RNA molecules used as primers for DNA polymerase during DNA replication. The chain is DNA primase from Staphylococcus aureus.